Reading from the N-terminus, the 501-residue chain is MDSRLARLTTLQTSAGEELRRTSIIGTIGPKTNNPETLVALRKAGLNIVRMNFSHGSYEYHKSVIDNARKSEELYPGRPLAIALDTKGPEIRTGTTTNEVDYPIPPNHEMIFTTDDKYAKACDDKIMYLDYKNITKVISAGRIIYVDDGVLSFEVLQVVDDKTLKVKSLNAGKICSHKGVNLPGTDVDLPALSEKDKADLRFGVENGVHMIFASFIRTAQDVLTIREVLGEDGKDIKIVVKIENQQGVNNFDEILKVTDAVMVARGDLGIEIPAPEVLAVQKKLIAKSNLAGKPVICATQMLESMTYNPRPTRAEVSDVGNAVLDGADCVMLSGETAKGNYPINAVTTMAETALIAEQAIAYLPNYDDIRNCTPKPTSTTETVAASAVAAVFEQKAKAIIVLSTSGTTARLVSKYRPNCPIILVTRNARTARFSHLYRGVFPFVYEKESVSDWTEDVEARLNFGIEQAIEFGILKKGDTYVSIQGFKAGVGHSNTLQVSTA.

Substrate is bound at residue Arg-50. Residues Asn-52, Ser-54, Asp-85, and Thr-86 each contribute to the K(+) site. 52–55 (NFSH) is an ATP binding site. 2 residues coordinate ATP: Arg-92 and Lys-178. Glu-243 lines the Mg(2+) pocket. Residues Gly-266, Asp-267, and Thr-299 each contribute to the substrate site. Position 267 (Asp-267) interacts with Mg(2+).

The protein belongs to the pyruvate kinase family. Homotetramer. Requires Mg(2+) as cofactor. The cofactor is K(+).

The enzyme catalyses pyruvate + ATP = phosphoenolpyruvate + ADP + H(+). It participates in carbohydrate degradation; glycolysis; pyruvate from D-glyceraldehyde 3-phosphate: step 5/5. The polypeptide is Pyruvate kinase 1 (PYK1) (Candida glabrata (strain ATCC 2001 / BCRC 20586 / JCM 3761 / NBRC 0622 / NRRL Y-65 / CBS 138) (Yeast)).